Reading from the N-terminus, the 347-residue chain is MDMKVEKLSEDEIALYDRQIRLWGMTAQANMRSAKVLLINLGAIGSEITKSIVLSGIGHLTILDGHMVTEEDLGSQFFIGSEDVGQWKIDATKERIQDLNPRIELNFDKQDLQEKDEEFFQQFDLVVATEMQIDEAIKINTLTRKLNIPLYVAGSNGLFAYVFIDLIEFISEDEKLQSVRPTTVGPISSNRSIIEVTTRKDEEDEKKTYERIKTKNCYRPLNEVLSTATLKEKMTQRQLKRVTSILPLTLSLLQYGLNQKGKAISFEQMKRDAAVWCENLGVPATVVKDDYIQQFIKQKGIEFAPVAAIIGGAVAQDVINILGKRLSPLNNFIVFDGITLDMPLFEF.

Ser-9 is subject to Phosphoserine. Residue Lys-35 forms a Glycyl lysine isopeptide (Lys-Gly) (interchain with G-Cter in SUMO) linkage.

Its function is as follows. Could be involved in a ubiquitin-related process important for DNA damage tolerance. This chain is DNA damage tolerance protein RHC31 (AOS1), found in Saccharomyces cerevisiae (strain ATCC 204508 / S288c) (Baker's yeast).